Here is a 465-residue protein sequence, read N- to C-terminus: Cysteine--tRNA ligase (465 aa).

Cys29 contacts Zn(2+). Positions 31–41 match the 'HIGH' region motif; sequence PTVYNYIHIGN. Positions 209, 234, and 238 each coordinate Zn(2+). The 'KMSKS' region motif lies at 266–270; it reads KMSKS. Lys269 lines the ATP pocket. A Phosphoserine modification is found at Ser270.

It belongs to the class-I aminoacyl-tRNA synthetase family. In terms of assembly, monomer. It depends on Zn(2+) as a cofactor.

It localises to the cytoplasm. The enzyme catalyses tRNA(Cys) + L-cysteine + ATP = L-cysteinyl-tRNA(Cys) + AMP + diphosphate. The chain is Cysteine--tRNA ligase from Bacillus cereus (strain B4264).